Reading from the N-terminus, the 632-residue chain is Basic helix-loop-helix ARNT-like protein 1 (632 aa).

Positions 1-39 (MADQRMDISSTISDFMSPGPTDLLSGSLGTSGVDCNRKR) are disordered. S17 bears the Phosphoserine; by GSK3-beta mark. The residue at position 21 (T21) is a Phosphothreonine; by GSK3-beta. Positions 36 to 41 (NRKRKG) match the Nuclear localization signal motif. In terms of domain architecture, bHLH spans 79–132 (NAREAHSQIEKRRRDKMNSFIDELASLVPTCNAMSRKLDKLTVLRMAVQHMKTL). S85 carries the phosphoserine modification. Residue S97 is modified to Phosphoserine; by CK2. The Nuclear export signal 1 motif lies at 149–159 (LSDDELKHLIL). The PAS 1 domain occupies 150–222 (SDDELKHLIL…EQLSSSDTAP (73 aa)). K259 is covalently cross-linked (Glycyl lysine isopeptide (Lys-Gly) (interchain with G-Cter in SUMO2 and SUMO3)). A Glycyl lysine isopeptide (Lys-Gly) (interchain with G-Cter in SUMO); alternate cross-link involves residue K266. K266 is covalently cross-linked (Glycyl lysine isopeptide (Lys-Gly) (interchain with G-Cter in SUMO2); alternate). One can recognise a PAS 2 domain in the interval 333 to 403 (QPANGEIRVK…CHRQVLQTRE (71 aa)). Positions 367–375 (LAYLPQELL) match the Nuclear export signal 2 motif. The PAC domain maps to 408–451 (NCYKFKIKDGSFITLRSRWFSFMNPWTKEVEYIVSTNTVVLANV). Disordered regions lie at residues 465 to 498 (PPHSMDSMLPSGEGGPKRTHPTVPGIPGGTRAGA) and 517 to 601 (GSSP…SPSN). Positions 514–594 (RIRGSSPSSC…IGIDMIDNDQ (81 aa)) are interaction with CIART. Residues 517 to 527 (GSSPSSCGSSP) are compositionally biased toward low complexity. K544 bears the N6-acetyllysine mark.

Component of the circadian clock oscillator which includes the CRY1/2 proteins, CLOCK or NPAS2, BMAL1 or BMAL2, CSNK1D and/or CSNK1E, TIMELESS and the PER1/2/3 proteins. Forms a heterodimer with CLOCK. The CLOCK-BMAL1 heterodimer is required for E-box-dependent transactivation, for CLOCK nuclear translocation and degradation, and, for phosphorylation of both CLOCK and BMAL1. Part of a nuclear complex which also includes RACK1 and PRKCA; RACK1 and PRKCA are recruited to the complex in a circadian manner. Interacts with NPAS2. Interacts with EZH2. Interacts with SUMO3. Interacts with SIRT1. Interacts with AHR. Interacts with ID1, ID2 and ID3. Interacts with DDX4. Interacts with OGT. Interacts with EED and SUZ12. Interacts with MTA1. Interacts with CIART. Interacts with HSP90. Interacts with KAT2B and EP300. Interacts with BHLHE40/DEC1 and BHLHE41/DEC2. Interacts with RELB and the interaction is enhanced in the presence of CLOCK. Interacts with PER1, PER2, CRY1 and CRY2 and this interaction requires a translocation to the nucleus. Interaction of the CLOCK-BMAL1 heterodimer with PER or CRY inhibits transcription activation. Interaction of the CLOCK-BMAL1 with CRY1 is independent of DNA but with PER2 is off DNA. The CLOCK-BMAL1 heterodimer interacts with GSK3B. Interacts with KDM5A. Interacts with KMT2A; in a circadian manner. Interacts with UBE3A. Interacts with PRKCG. Interacts with MAGEL2. Interacts with NCOA2. Interacts with THRAP3. The CLOCK-BMAL1 heterodimer interacts with PASD1. Interacts with PASD1. Interacts with USP9X. Interacts with PIWIL2 (via PIWI domain). Interacts with HDAC3. Interacts with HNF4A. Ubiquitinated, leading to its proteasomal degradation. Deubiquitinated by USP9X. Post-translationally, O-glycosylated; contains O-GlcNAc. O-glycosylation by OGT prevents protein degradation by inhibiting ubiquitination. It also stabilizes the CLOCK-BMAL1 heterodimer thereby increasing CLOCK-BMAL1-mediated transcription of genes in the negative loop of the circadian clock such as PER1/2/3 and CRY1/2. In terms of processing, acetylated on Lys-544 by CLOCK during the repression phase of the circadian cycle. Acetylation facilitates recruitment of CRY1 protein and initiates the repression phase of the circadian cycle. Acetylated at Lys-544 by KAT5 during the activation phase of the cycle, leading to recruitment of the positive transcription elongation factor b (P-TEFb) and BRD4, followed by productive elongation of circadian transcripts. Deacetylated by SIRT1, which may result in decreased protein stability. Phosphorylated upon dimerization with CLOCK. Phosphorylation enhances the transcriptional activity, alters the subcellular localization and decreases the stability of the CLOCK-BMAL1 heterodimer by promoting its degradation. Phosphorylation shows circadian variations in the liver with a peak between CT10 to CT14. Phosphorylation at Ser-97 by CK2 is essential for its nuclear localization, its interaction with CLOCK and controls CLOCK nuclear entry. Dephosphorylation at Ser-85 is important for dimerization with CLOCK and transcriptional activity. Post-translationally, sumoylated on Lys-266 upon dimerization with CLOCK. Predominantly conjugated to poly-SUMO2/3 rather than SUMO1 and the level of these conjugates undergo rhythmic variation, peaking at CT9-CT12. Sumoylation localizes it exclusively to the PML body and promotes its ubiquitination in the PML body, ubiquitin-dependent proteasomal degradation and the transcriptional activity of the CLOCK-BMAL1 heterodimer. In terms of processing, undergoes lysosome-mediated degradation in a time-dependent manner in the liver. In terms of tissue distribution, expressed in liver and testis (at protein level). Expressed in the suprachiasmatic nucleus (SCN) in a circadian manner.

The protein localises to the nucleus. It localises to the cytoplasm. It is found in the PML body. Its activity is regulated as follows. The redox state of the cell can modulate the transcriptional activity of the CLOCK-BMAL1 and NPAS2-BMAL1 heterodimers; NADH and NADPH enhance the DNA-binding activity of the heterodimers. Transcriptional activator which forms a core component of the circadian clock. The circadian clock, an internal time-keeping system, regulates various physiological processes through the generation of approximately 24 hour circadian rhythms in gene expression, which are translated into rhythms in metabolism and behavior. It is derived from the Latin roots 'circa' (about) and 'diem' (day) and acts as an important regulator of a wide array of physiological functions including metabolism, sleep, body temperature, blood pressure, endocrine, immune, cardiovascular, and renal function. Consists of two major components: the central clock, residing in the suprachiasmatic nucleus (SCN) of the brain, and the peripheral clocks that are present in nearly every tissue and organ system. Both the central and peripheral clocks can be reset by environmental cues, also known as Zeitgebers (German for 'timegivers'). The predominant Zeitgeber for the central clock is light, which is sensed by retina and signals directly to the SCN. The central clock entrains the peripheral clocks through neuronal and hormonal signals, body temperature and feeding-related cues, aligning all clocks with the external light/dark cycle. Circadian rhythms allow an organism to achieve temporal homeostasis with its environment at the molecular level by regulating gene expression to create a peak of protein expression once every 24 hours to control when a particular physiological process is most active with respect to the solar day. Transcription and translation of core clock components (CLOCK, NPAS2, BMAL1, BMAL2, PER1, PER2, PER3, CRY1 and CRY2) plays a critical role in rhythm generation, whereas delays imposed by post-translational modifications (PTMs) are important for determining the period (tau) of the rhythms (tau refers to the period of a rhythm and is the length, in time, of one complete cycle). A diurnal rhythm is synchronized with the day/night cycle, while the ultradian and infradian rhythms have a period shorter and longer than 24 hours, respectively. Disruptions in the circadian rhythms contribute to the pathology of cardiovascular diseases, cancer, metabolic syndromes and aging. A transcription/translation feedback loop (TTFL) forms the core of the molecular circadian clock mechanism. Transcription factors, CLOCK or NPAS2 and BMAL1 or BMAL2, form the positive limb of the feedback loop, act in the form of a heterodimer and activate the transcription of core clock genes and clock-controlled genes (involved in key metabolic processes), harboring E-box elements (5'-CACGTG-3') within their promoters. The core clock genes: PER1/2/3 and CRY1/2 which are transcriptional repressors form the negative limb of the feedback loop and interact with the CLOCK|NPAS2-BMAL1|BMAL2 heterodimer inhibiting its activity and thereby negatively regulating their own expression. This heterodimer also activates nuclear receptors NR1D1/2 and RORA/B/G, which form a second feedback loop and which activate and repress BMAL1 transcription, respectively. BMAL1 positively regulates myogenesis and negatively regulates adipogenesis via the transcriptional control of the genes of the canonical Wnt signaling pathway. Plays a role in normal pancreatic beta-cell function; regulates glucose-stimulated insulin secretion via the regulation of antioxidant genes NFE2L2/NRF2 and its targets SESN2, PRDX3, CCLC and CCLM. Negatively regulates the mTORC1 signaling pathway; regulates the expression of MTOR and DEPTOR. Controls diurnal oscillations of Ly6C inflammatory monocytes; rhythmic recruitment of the PRC2 complex imparts diurnal variation to chemokine expression that is necessary to sustain Ly6C monocyte rhythms. Regulates the expression of HSD3B2, STAR, PTGS2, CYP11A1, CYP19A1 and LHCGR in the ovary and also the genes involved in hair growth. Plays an important role in adult hippocampal neurogenesis by regulating the timely entry of neural stem/progenitor cells (NSPCs) into the cell cycle and the number of cell divisions that take place prior to cell-cycle exit. Regulates the circadian expression of CIART and KLF11. The CLOCK-BMAL1 heterodimer regulates the circadian expression of SERPINE1/PAI1, VWF, B3, CCRN4L/NOC, NAMPT, DBP, MYOD1, PPARGC1A, PPARGC1B, SIRT1, GYS2, F7, NGFR, GNRHR, BHLHE40/DEC1, ATF4, MTA1, KLF10 and also genes implicated in glucose and lipid metabolism. Promotes rhythmic chromatin opening, regulating the DNA accessibility of other transcription factors. May play a role in spermatogenesis; contributes to the chromatoid body assembly and physiology. The NPAS2-BMAL1 heterodimer positively regulates the expression of MAOA, F7 and LDHA and modulates the circadian rhythm of daytime contrast sensitivity by regulating the rhythmic expression of adenylate cyclase type 1 (ADCY1) in the retina. The preferred binding motif for the CLOCK-BMAL1 heterodimer is 5'-CACGTGA-3', which contains a flanking adenine nucleotide at the 3-prime end of the canonical 6-nucleotide E-box sequence. CLOCK specifically binds to the half-site 5'-CAC-3', while BMAL1 binds to the half-site 5'-GTGA-3'. The CLOCK-BMAL1 heterodimer also recognizes the non-canonical E-box motifs 5'-AACGTGA-3' and 5'-CATGTGA-3'. Essential for the rhythmic interaction of CLOCK with ASS1 and plays a critical role in positively regulating CLOCK-mediated acetylation of ASS1. Plays a role in protecting against lethal sepsis by limiting the expression of immune checkpoint protein CD274 in macrophages in a PKM2-dependent manner. Regulates the diurnal rhythms of skeletal muscle metabolism via transcriptional activation of genes promoting triglyceride synthesis (DGAT2) and metabolic efficiency (COQ10B). This Mus musculus (Mouse) protein is Basic helix-loop-helix ARNT-like protein 1 (Bmal1).